The chain runs to 356 residues: uncharacterized protein (356 aa).

A run of 6 helical transmembrane segments spans residues Leu-7–Tyr-29, Tyr-49–Ile-71, Ile-91–Leu-113, Leu-270–Phe-292, Gln-299–Leu-316, and Val-329–Tyr-348.

The protein resides in the cell membrane. This is an uncharacterized protein from Aquifex aeolicus (strain VF5).